A 179-amino-acid chain; its full sequence is ATP-dependent protease subunit HslV (179 aa).

Residue threonine 5 is part of the active site. The Na(+) site is built by glycine 164, cysteine 167, and threonine 170.

It belongs to the peptidase T1B family. HslV subfamily. In terms of assembly, a double ring-shaped homohexamer of HslV is capped on each side by a ring-shaped HslU homohexamer. The assembly of the HslU/HslV complex is dependent on binding of ATP.

It is found in the cytoplasm. The catalysed reaction is ATP-dependent cleavage of peptide bonds with broad specificity.. Its activity is regulated as follows. Allosterically activated by HslU binding. In terms of biological role, protease subunit of a proteasome-like degradation complex believed to be a general protein degrading machinery. The protein is ATP-dependent protease subunit HslV of Verminephrobacter eiseniae (strain EF01-2).